Here is a 290-residue protein sequence, read N- to C-terminus: Elongation factor Ts (290 aa).

An involved in Mg(2+) ion dislocation from EF-Tu region spans residues 83–86 (TDFV).

Belongs to the EF-Ts family.

Its subcellular location is the cytoplasm. In terms of biological role, associates with the EF-Tu.GDP complex and induces the exchange of GDP to GTP. It remains bound to the aminoacyl-tRNA.EF-Tu.GTP complex up to the GTP hydrolysis stage on the ribosome. The protein is Elongation factor Ts (tsf) of Aquifex aeolicus (strain VF5).